The chain runs to 579 residues: UPF0324 membrane protein DVU_0943 (579 aa).

The next 10 helical transmembrane spans lie at 26-45 (YWAI…LFLA), 193-215 (AFNI…AIGM), 225-243 (FLVG…QMMG), 250-272 (YWGI…TVGT), 305-327 (IGIP…TFIF), 369-391 (LTLS…PAFI), 430-452 (AATI…AVYW), 473-495 (FPKF…GSLG), 515-533 (LRGW…ATNF), and 546-568 (LILY…YIMF).

Belongs to the UPF0324 family.

Its subcellular location is the cell membrane. The chain is UPF0324 membrane protein DVU_0943 from Nitratidesulfovibrio vulgaris (strain ATCC 29579 / DSM 644 / CCUG 34227 / NCIMB 8303 / VKM B-1760 / Hildenborough) (Desulfovibrio vulgaris).